The primary structure comprises 175 residues: CDP-archaeol synthase (175 aa).

The next 4 helical transmembrane spans lie at 41–61, 82–102, 122–142, and 150–170; these read GLFS…WLSS, LIVV…KSFF, FVVG…VSNF, and VIII…LIGV.

It belongs to the CDP-archaeol synthase family. Mg(2+) is required as a cofactor.

It is found in the cell membrane. It carries out the reaction 2,3-bis-O-(geranylgeranyl)-sn-glycerol 1-phosphate + CTP + H(+) = CDP-2,3-bis-O-(geranylgeranyl)-sn-glycerol + diphosphate. It functions in the pathway membrane lipid metabolism; glycerophospholipid metabolism. In terms of biological role, catalyzes the formation of CDP-2,3-bis-(O-geranylgeranyl)-sn-glycerol (CDP-archaeol) from 2,3-bis-(O-geranylgeranyl)-sn-glycerol 1-phosphate (DGGGP) and CTP. This reaction is the third ether-bond-formation step in the biosynthesis of archaeal membrane lipids. This is CDP-archaeol synthase from Methanosarcina barkeri (strain Fusaro / DSM 804).